The chain runs to 141 residues: Hemoglobin subunit alpha-D (141 aa).

The Globin domain occupies 1–141 (VLTAEDRRLL…VADVLCEKYR (141 aa)). Residues Gln58 and His87 each contribute to the heme b site.

This sequence belongs to the globin family. As to quaternary structure, heterotetramer of two alpha chains and two beta chains. In terms of tissue distribution, red blood cells.

In terms of biological role, involved in oxygen transport from the lung to the various peripheral tissues. The sequence is that of Hemoglobin subunit alpha-D from Drymarchon melanurus erebennus (Texas indigo snake).